The sequence spans 614 residues: Zinc metalloproteinase dpy-31 (614 aa).

The signal sequence occupies residues 1-24 (MSLLRCTTLLLVVVAIALPPCILG). Residues 25–150 (YSLHDGSRLD…KTGQRRVKRK (126 aa)) constitute a propeptide that is removed on maturation. The region spanning 150-349 (KFIGSDLRRW…IRLMNKIYCS (200 aa)) is the Peptidase M12A domain. N-linked (GlcNAc...) asparagine glycosylation occurs at Asn190. 5 cysteine pairs are disulfide-bonded: Cys193–Cys348, Cys216–Cys237, Cys352–Cys372, Cys374–Cys383, and Cys394–Cys422. His245 is a Zn(2+) binding site. Residue Glu246 is part of the active site. Residues His249 and His255 each contribute to the Zn(2+) site. The region spanning 344–384 (NKIYCSNVCSRKLPCQRGGYTDPRRCDRCRCPDGFTGQFCE) is the EGF-like domain. One can recognise a CUB domain in the interval 394-510 (CGGRIQVNGG…RGFEARARAL (117 aa)). Asn461 carries an N-linked (GlcNAc...) asparagine glycan. Residues 513–562 (NGQWASWSPWTPCTASCGACGSRMRTRVCSHGACAGEPVENQVCNTHPCN) enclose the TSP type-1 domain. Cystine bridges form between Cys525–Cys556, Cys529–Cys561, and Cys541–Cys546.

Zn(2+) is required as a cofactor.

The protein localises to the secreted. Its activity is regulated as follows. Inhibited by marimastat and tripeptide hydroxamic acids. Inhibited by 1,10-phenanthroline. Its function is as follows. Metalloprotease which cleaves the carboxyl terminus of procollagens to mature collagens. Probably involved in cuticular collagen maturation. In Teladorsagia circumcincta (Brown stomach worm), this protein is Zinc metalloproteinase dpy-31.